A 998-amino-acid polypeptide reads, in one-letter code: 2-imino-3-(indol-3-yl)propanoate dimerase (998 aa).

It catalyses the reaction 2 H2O2 = O2 + 2 H2O. The enzyme catalyses 2 2-iminio-3-(indol-3-yl)propanoate + H2O2 = indole-3-pyruvate imine dimer + 2 H2O. The protein operates within pigment biosynthesis; violacein biosynthesis. In terms of biological role, catalyzes the hydrogen peroxide-dependent dimerization of two L-tryptophan-derived molecules (imine form of indole 3-pyruvate (IPA)), to form an uncharacterized product suggested to be indole-3-pyruvate imine dimer that can spontaneously convert into dichlorochromopyrrolate (CPA). The uncharacterized product is the substrate of VioE. This is 2-imino-3-(indol-3-yl)propanoate dimerase (vioB) from Chromobacterium violaceum (strain ATCC 12472 / DSM 30191 / JCM 1249 / CCUG 213 / NBRC 12614 / NCIMB 9131 / NCTC 9757 / MK).